Reading from the N-terminus, the 127-residue chain is Modulator protein MzrA (127 aa).

Residues methionine 1 to leucine 11 are Cytoplasmic-facing. A helical membrane pass occupies residues alanine 12–valine 31. Residues arginine 32–glycine 127 lie on the Periplasmic side of the membrane.

This sequence belongs to the MzrA family. As to quaternary structure, interacts with EnvZ.

Its subcellular location is the cell inner membrane. Functionally, modulates the activity of the EnvZ/OmpR two-component regulatory system, probably by directly modulating EnvZ enzymatic activity and increasing stability of phosphorylated OmpR. This is Modulator protein MzrA from Citrobacter rodentium (strain ICC168) (Citrobacter freundii biotype 4280).